The sequence spans 430 residues: Chromatin assembly factor 1 p55 subunit (430 aa).

A phosphoserine mark is found at Ser11 and Ser100. 6 WD repeats span residues 126-159 (NHEG…FDYT), 179-210 (GHQK…CLWD), 229-260 (GHTA…MIWD), 275-306 (AHTA…ALWD), 319-350 (SHKD…HVWD), and 376-407 (GHTA…QVWQ).

Belongs to the WD repeat RBAP46/RBAP48/MSI1 family. In terms of assembly, probably binds directly to helix 1 of the histone fold of histone H4, a region that is not accessible when H4 is in chromatin. Self associates. Associates with chromatin. Component of the CAF-1 complex, composed of Caf1-55, Caf1-105 and Caf1-180; within the CAF-1 complex, Caf1-180 interacts directly with both Caf1-55 and Caf1-105. Component of the NuRD complex, composed of at least Caf1-55, Mi-2, MTA1-like and HDAC1/Rpd3. Within the NuRD complex, Caf1-55 may interact directly with Mi-2, MTA1-like and HDAC1/Rpd3. The NuRD complex may also associate with the methyl-DNA binding protein MBD-like via Caf1-55 and Mi-2. Component of the NURF complex, composed of Caf1-55, E(bx), Nurf-38 and Iswi. Component of the polycomb repressive complex 2 (PRC2, also known as the Esc/E(Z) complex), composed of Caf1-55, esc, E(z), Su(z)12, and possibly pho. PRC2 associates with the accessory components Jarid2 and jing to form the PRC2 Jarid2-jing variant (PRC2.2). PRC2 may also associate with Pcl and HDAC1/Rpd3 during early embryogenesis. Interacts with Rbf and Rbf2. Component of the DREAM complex at least composed of Myb, Caf1-55, mip40, mip120, mip130, E2f2, Dp, Rbf, Rbf2, lin-52, HDAC1/Rpd3 and l(3)mbt.

The protein localises to the nucleus. Functionally, core histone-binding subunit that may target chromatin assembly factors, chromatin remodeling factors and histone deacetylases to their histone substrates in a manner that is regulated by nucleosomal DNA. Component of several complexes which regulate chromatin metabolism. These include the chromatin assembly factor 1 (CAF-1) complex, which is required for chromatin assembly following DNA replication and DNA repair; the nucleosome remodeling and deacetylase complex (the NuRD complex), which promotes transcriptional repression by histone deacetylation and nucleosome remodeling; the nucleosome remodeling factor (NURF) complex, which catalyzes ATP-dependent nucleosome sliding and facilitates transcription of chromatin; and the polycomb group (PcG) repressor complex ESC-E(Z), which promotes repression of homeotic genes during development. Also required for transcriptional repression of E2F target genes by E2f2 and Rbf or Rbf2. This Drosophila melanogaster (Fruit fly) protein is Chromatin assembly factor 1 p55 subunit.